The following is a 329-amino-acid chain: Short-chain dehydrogenase/reductase tropG (329 aa).

NADP(+) contacts are provided by Lys57, Asp86, Asn113, Tyr203, and Lys207. Residue Tyr203 is the Proton acceptor of the active site. Lys207 (lowers pKa of active site Tyr) is an active-site residue.

This sequence belongs to the short-chain dehydrogenases/reductases (SDR) family.

It participates in secondary metabolite biosynthesis. In terms of biological role, short-chain dehydrogenase/reductase; part of the gene cluster that mediates the biosynthesis of the tropolone class of fungal maleic anhydrides. The pathway begins with the synthesis of 3-methylorcinaldehyde by the non-reducing polyketide synthase (PKS) tropA. 3-methylorcinaldehyde is the substrate for the FAD-dependent monooxygenase tropB to yield a dearomatized hydroxycyclohexadione. The 2-oxoglutarate-dependent dioxygenase tropC then performs the oxidative ring expansion to provide the first tropolone metabolite stipitaldehyde. Trop D converts stipitaldehyde into stipitacetal which is in turn converted to stipitalide by the short-chain dehydrogenase/reductase tropE. The next steps involve tropF, tropG, tropH, tropI and tropJ to form successive tropolone maleic anhydrides including stipitaldehydic, stipitatonic and stipitatic acids. The protein is Short-chain dehydrogenase/reductase tropG of Talaromyces stipitatus (strain ATCC 10500 / CBS 375.48 / QM 6759 / NRRL 1006) (Penicillium stipitatum).